A 217-amino-acid chain; its full sequence is tRNA (guanine-N(7)-)-methyltransferase (217 aa).

Residues glutamate 48, glutamate 73, asparagine 100, and aspartate 123 each contribute to the S-adenosyl-L-methionine site. Aspartate 123 is an active-site residue. Substrate-binding residues include lysine 127 and aspartate 159.

Belongs to the class I-like SAM-binding methyltransferase superfamily. TrmB family.

The enzyme catalyses guanosine(46) in tRNA + S-adenosyl-L-methionine = N(7)-methylguanosine(46) in tRNA + S-adenosyl-L-homocysteine. It participates in tRNA modification; N(7)-methylguanine-tRNA biosynthesis. Catalyzes the formation of N(7)-methylguanine at position 46 (m7G46) in tRNA. The polypeptide is tRNA (guanine-N(7)-)-methyltransferase (Leptospira interrogans serogroup Icterohaemorrhagiae serovar Lai (strain 56601)).